Consider the following 128-residue polypeptide: Gastrotropin (128 aa).

Residue alanine 2 is modified to N-acetylalanine.

This sequence belongs to the calycin superfamily. Fatty-acid binding protein (FABP) family. As to expression, expressed in ovary granulosa and luteal cells.

It localises to the cytoplasm. Its subcellular location is the membrane. Its function is as follows. Binds to bile acids and is involved in enterohepatic bile acid metabolism. Required for efficient apical to basolateral transport of conjugated bile acids in ileal enterocytes. Stimulates gastric acid and pepsinogen secretion. The sequence is that of Gastrotropin (Fabp6) from Mus musculus (Mouse).